The following is a 382-amino-acid chain: Probable G-protein coupled receptor 132 (382 aa).

Residues methionine 1–leucine 42 lie on the Extracellular side of the membrane. Asparagine 11 is a glycosylation site (N-linked (GlcNAc...) asparagine). Residues valine 43–leucine 65 traverse the membrane as a helical segment. Topologically, residues leucine 66–valine 76 are cytoplasmic. The helical transmembrane segment at tyrosine 77 to isoleucine 99 threads the bilayer. Over glutamine 100–lysine 113 the chain is Extracellular. Cysteine 112 and cysteine 184 are joined by a disulfide. The helical transmembrane segment at valine 114–cysteine 135 threads the bilayer. At aspartate 136–threonine 155 the chain is on the cytoplasmic side. Residues alanine 156–phenylalanine 175 traverse the membrane as a helical segment. The Extracellular segment spans residues aspartate 176–histidine 198. Residues tyrosine 199 to phenylalanine 221 traverse the membrane as a helical segment. Topologically, residues arginine 222–serine 241 are cytoplasmic. Residues alanine 242 to leucine 261 form a helical membrane-spanning segment. Residues valine 262–threonine 286 lie on the Extracellular side of the membrane. A helical transmembrane segment spans residues valine 287 to glycine 309. At threonine 310–cysteine 382 the chain is on the cytoplasmic side.

The protein belongs to the G-protein coupled receptor 1 family. Highly expressed in hematopoietic tissues rich in lymphocytes like spleen and thymus. Weakly expressed in heart and lung. Highly expressed in infiltrating macrophages within atherosclerotic lesions.

The protein localises to the cell membrane. May be a receptor for oxidized free fatty acids derived from linoleic and arachidonic acids such as 9-hydroxyoctadecadienoic acid (9-HODE). Activates a G alpha protein, most likely G alpha(q). May be involved in apoptosis. Functions at the G2/M checkpoint to delay mitosis. May function as a sensor that monitors the oxidative states and mediates appropriate cellular responses such as secretion of paracrine signals and attenuation of proliferation. May mediate ths accumulation of intracellular inositol phosphates at acidic pH through proton-sensing activity. This Mus musculus (Mouse) protein is Probable G-protein coupled receptor 132 (Gpr132).